The sequence spans 1770 residues: Transposon Ty2-DR3 Gag-Pol polyprotein (1770 aa).

Composition is skewed to polar residues over residues 1–11 (MESQQLHQNPH), 19–39 (ASVT…SASN), 49–60 (KVNSQQETTPGT), 366–390 (VSRT…NSSK), 399–408 (IATSSKFSRV), and 415–435 (ESTV…GQQQ). Disordered regions lie at residues 1 to 89 (MESQ…QQHG) and 355 to 449 (SQYK…SNDE). Residues 295 to 397 (ENNINVSDRL…SSKPRAAKAH (103 aa)) are RNA-binding. The active-site For protease activity; shared with dimeric partner is the D457. The tract at residues 579–636 (NVNKSKSVNKYPYPLIHRMLGHANFRSIQKSLKKNAVTYLKESDIEWSNASTYQCPDC) is integrase-type zinc finger-like. In terms of domain architecture, Integrase catalytic spans 656-831 (ESYEPFQYLH…AGLDITTILP (176 aa)). 2 residues coordinate Mg(2+): D667 and D732. Disordered stretches follow at residues 1005–1038 (GGTI…MIDL) and 1057–1205 (GGTE…TEIE). Polar residues-rich tracts occupy residues 1009 to 1024 (ESDT…FTAR) and 1065 to 1082 (QRNS…STPS). Residues 1193–1227 (KKRSLEDNETEIEVSRDTWNNKNMRSLEPPRSKKR) carry the Bipartite nuclear localization signal motif. The Reverse transcriptase Ty1/copia-type domain maps to 1353 to 1491 (NDYYITQLDI…DILGLEIKYQ (139 aa)). 6 residues coordinate Mg(2+): D1361, D1442, D1443, D1625, E1667, and D1700. Residues 1625–1767 (DASYGNQPYY…IKTFKLLTNK (143 aa)) enclose the RNase H Ty1/copia-type domain.

As to quaternary structure, the capsid protein forms a homotrimer, from which the VLPs are assembled. The protease is a homodimer, whose active site consists of two apposed aspartic acid residues. Post-translationally, initially, virus-like particles (VLPs) are composed of the structural unprocessed proteins Gag and Gag-Pol, and also contain the host initiator methionine tRNA (tRNA(i)-Met) which serves as a primer for minus-strand DNA synthesis, and a dimer of genomic Ty RNA. Processing of the polyproteins occurs within the particle and proceeds by an ordered pathway, called maturation. First, the protease (PR) is released by autocatalytic cleavage of the Gag-Pol polyprotein, and this cleavage is a prerequisite for subsequent processing at the remaining sites to release the mature structural and catalytic proteins. Maturation takes place prior to the RT reaction and is required to produce transposition-competent VLPs.

It localises to the cytoplasm. Its subcellular location is the nucleus. It carries out the reaction DNA(n) + a 2'-deoxyribonucleoside 5'-triphosphate = DNA(n+1) + diphosphate. The catalysed reaction is Endonucleolytic cleavage to 5'-phosphomonoester.. Functionally, capsid protein (CA) is the structural component of the virus-like particle (VLP), forming the shell that encapsulates the retrotransposons dimeric RNA genome. The particles are assembled from trimer-clustered units and there are holes in the capsid shells that allow for the diffusion of macromolecules. CA also has nucleocapsid-like chaperone activity, promoting primer tRNA(i)-Met annealing to the multipartite primer-binding site (PBS), dimerization of Ty2 RNA and initiation of reverse transcription. Its function is as follows. The aspartyl protease (PR) mediates the proteolytic cleavages of the Gag and Gag-Pol polyproteins after assembly of the VLP. Reverse transcriptase/ribonuclease H (RT) is a multifunctional enzyme that catalyzes the conversion of the retro-elements RNA genome into dsDNA within the VLP. The enzyme displays a DNA polymerase activity that can copy either DNA or RNA templates, and a ribonuclease H (RNase H) activity that cleaves the RNA strand of RNA-DNA heteroduplexes during plus-strand synthesis and hydrolyzes RNA primers. The conversion leads to a linear dsDNA copy of the retrotransposon that includes long terminal repeats (LTRs) at both ends. In terms of biological role, integrase (IN) targets the VLP to the nucleus, where a subparticle preintegration complex (PIC) containing at least integrase and the newly synthesized dsDNA copy of the retrotransposon must transit the nuclear membrane. Once in the nucleus, integrase performs the integration of the dsDNA into the host genome. This Saccharomyces cerevisiae (strain ATCC 204508 / S288c) (Baker's yeast) protein is Transposon Ty2-DR3 Gag-Pol polyprotein (TY2B-DR3).